A 192-amino-acid chain; its full sequence is Transposon Tn552 DNA-invertase BinR (192 aa).

One can recognise a Resolvase/invertase-type recombinase catalytic domain in the interval 1–136 (MKIGYARVST…AGRIAARARG (136 aa)). Ser-9 serves as the catalytic O-(5'-phospho-DNA)-serine intermediate. Positions 163 to 182 (IKTIAEQWKVSRTTIYRYLN) form a DNA-binding region, H-T-H motif.

This sequence belongs to the site-specific recombinase resolvase family.

DNA-invertase, mediating the inversion of inv. This chain is Transposon Tn552 DNA-invertase BinR (resR), found in Staphylococcus aureus.